We begin with the raw amino-acid sequence, 399 residues long: Protein translocase subunit SecD (399 aa).

6 helical membrane-spanning segments follow: residues 7 to 27 (IKTAFIVIILGIAIWILLTFP), 239 to 259 (VIGAILVVLFMILVFRFLGLV), 262 to 282 (IALLIYVVLDLAALKLLNATL), 286 to 306 (GVAGIILSIGMAVDANCLIFA), 329 to 351 (ALRAIIDSNVTTILAALILFYFG), and 357 to 381 (GFAVTLSLGVALSMFTQITITRTLL).

Belongs to the SecD/SecF family. SecD subfamily. In terms of assembly, forms a complex with SecF. Part of the essential Sec protein translocation apparatus which comprises SecA, SecYEG and auxiliary proteins SecDF. Other proteins may also be involved.

Its subcellular location is the cell inner membrane. Part of the Sec protein translocase complex. Interacts with the SecYEG preprotein conducting channel. SecDF uses the proton motive force (PMF) to complete protein translocation after the ATP-dependent function of SecA. This chain is Protein translocase subunit SecD, found in Dictyoglomus turgidum (strain DSM 6724 / Z-1310).